The sequence spans 181 residues: Secreted chorismate mutase (181 aa).

Positions 1–20 (MLASVALAALAGVGTPHATA) are cleaved as a signal peptide. Residues 21-100 (DDASPLVPLV…ATSSVEHTRF (80 aa)) form the Chorismate mutase domain. Residues Arg-36, Lys-47, Asp-56, 59 to 63 (REQQV), 92 to 96 (TSSVE), and Arg-121 each bind substrate. Cys-147 and Cys-180 form a disulfide bridge.

Homodimer.

The protein resides in the secreted. It carries out the reaction chorismate = prephenate. It functions in the pathway metabolic intermediate biosynthesis; prephenate biosynthesis; prephenate from chorismate: step 1/1. Its function is as follows. Catalyzes the Claisen rearrangement of chorismate to prephenate. May play some role in the pathogenicity. In Mycolicibacterium smegmatis (strain ATCC 700084 / mc(2)155) (Mycobacterium smegmatis), this protein is Secreted chorismate mutase.